Here is a 210-residue protein sequence, read N- to C-terminus: Fimbriae Z protein (210 aa).

The Response regulatory domain occupies 5-121; sequence SVIIMDEHPI…DIYNAVKMIL (117 aa). The residue at position 56 (Asp56) is a 4-aspartylphosphate. One can recognise an HTH luxR-type domain in the interval 143-208; it reads GGHHDMPLSN…ELIDYAKSHE (66 aa). The segment at residues 167-186 is a DNA-binding region (H-T-H motif); that stretch reads NKEIAEQLLLSNKTISAHKA.

The protein resides in the cytoplasm. This chain is Fimbriae Z protein (fimZ), found in Salmonella typhimurium (strain LT2 / SGSC1412 / ATCC 700720).